A 491-amino-acid polypeptide reads, in one-letter code: Probable glycine dehydrogenase (decarboxylating) subunit 2 (491 aa).

K264 bears the N6-(pyridoxal phosphate)lysine mark.

Belongs to the GcvP family. C-terminal subunit subfamily. In terms of assembly, the glycine cleavage system is composed of four proteins: P, T, L and H. In this organism, the P 'protein' is a heterodimer of two subunits. Requires pyridoxal 5'-phosphate as cofactor.

It catalyses the reaction N(6)-[(R)-lipoyl]-L-lysyl-[glycine-cleavage complex H protein] + glycine + H(+) = N(6)-[(R)-S(8)-aminomethyldihydrolipoyl]-L-lysyl-[glycine-cleavage complex H protein] + CO2. Its function is as follows. The glycine cleavage system catalyzes the degradation of glycine. The P protein binds the alpha-amino group of glycine through its pyridoxal phosphate cofactor; CO(2) is released and the remaining methylamine moiety is then transferred to the lipoamide cofactor of the H protein. The polypeptide is Probable glycine dehydrogenase (decarboxylating) subunit 2 (Coxiella burnetii (strain Dugway 5J108-111)).